The chain runs to 445 residues: Phosphoglucosamine mutase (445 aa).

Ser102 serves as the catalytic Phosphoserine intermediate. Ser102, Asp241, Asp243, and Asp245 together coordinate Mg(2+). Residue Ser102 is modified to Phosphoserine.

The protein belongs to the phosphohexose mutase family. The cofactor is Mg(2+). In terms of processing, activated by phosphorylation.

The enzyme catalyses alpha-D-glucosamine 1-phosphate = D-glucosamine 6-phosphate. Catalyzes the conversion of glucosamine-6-phosphate to glucosamine-1-phosphate. This chain is Phosphoglucosamine mutase, found in Aliivibrio fischeri (strain MJ11) (Vibrio fischeri).